The sequence spans 252 residues: MTEVDLNSDMGEGFGPWTIGDGVDAAIMPLISSANIATGFHAGDPSSMRRTVEMAAEHGVAIGAHPGFRDLVGFGRRHIAAPAIELVNDMLYQLGALREFARLQGLSLQHVKPHGALYMHLARDEVAARLFVETLQRLEPELLLYCMPGSATWRIGRELGQPLVREFYADRDYDRSGSIVFTRRVAALDPQQVADKVLRACREGKVRTVEGEDLDIAFDSVCIHSDTPGALELVASTRARLEGAGIRIKAPR.

Belongs to the LamB/PxpA family. As to quaternary structure, forms a complex composed of PxpA, PxpB and PxpC.

It carries out the reaction 5-oxo-L-proline + ATP + 2 H2O = L-glutamate + ADP + phosphate + H(+). Catalyzes the cleavage of 5-oxoproline to form L-glutamate coupled to the hydrolysis of ATP to ADP and inorganic phosphate. The protein is 5-oxoprolinase subunit A 1 of Pseudomonas aeruginosa (strain ATCC 15692 / DSM 22644 / CIP 104116 / JCM 14847 / LMG 12228 / 1C / PRS 101 / PAO1).